The chain runs to 149 residues: Transcriptional repressor NrdR (149 aa).

A zinc finger lies at 3-34 (CPFCDTEETKVIDSRLVSDGYQVRRRRECGHC). Positions 49–139 (PKIIKTDGTR…VYLSFDDIDQ (91 aa)) constitute an ATP-cone domain.

The protein belongs to the NrdR family. Zn(2+) is required as a cofactor.

In terms of biological role, negatively regulates transcription of bacterial ribonucleotide reductase nrd genes and operons by binding to NrdR-boxes. The sequence is that of Transcriptional repressor NrdR from Haemophilus influenzae (strain PittEE).